A 429-amino-acid chain; its full sequence is Saccharopine dehydrogenase-like oxidoreductase (429 aa).

Residue Ala2 is modified to N-acetylalanine. Phosphoserine is present on residues Ser209, Ser215, and Ser217.

It belongs to the saccharopine dehydrogenase family.

This is Saccharopine dehydrogenase-like oxidoreductase (Sccpdh) from Rattus norvegicus (Rat).